The primary structure comprises 217 residues: MAAAAASAVNAVNDCFSIGSTVVCTTCFNEEVEGEVLAFDHNTKMLILKCRSKSTEELSDIYAMNLSLCSNVQVIKECNGNFDDPQKLNLEQVKMRLRKTVERRQDYLKSKNADVSPEAQELYRAIAKQYGYNEVSWQGLNIQILNEVTISPPYRVDNVVSSSNNETSCNYIKRIIKQFFNTRPSPVPESGAAASTSSPSVSPTSSSLASGSPVPAN.

Residues 9-78 (VNAVNDCFSI…CSNVQVIKEC (70 aa)) form the Sm domain. The region spanning 86–184 (QKLNLEQVKM…IIKQFFNTRP (99 aa)) is the AD domain. Residues 185–217 (SPVPESGAAASTSSPSVSPTSSSLASGSPVPAN) are disordered. The span at 190-217 (SGAAASTSSPSVSPTSSSLASGSPVPAN) shows a compositional bias: low complexity.

It belongs to the LSM12 family. Component of the Atx2-tyf activator complex, composed of Atx2, tyf, pAbp, Lsm12a. Interacts with tyf, Atx2 and pAbp.

Functionally, component of the Atx2-tyf activator complex which functions in the circadian pacemaker neurons to activate the TYF-dependent translation of per and maintain 24 hour periodicity in circadian behaviors. Within the Atx2-tyf complex, likely to function as a molecular adapter which stabilizes the interaction between Atx2 and the translational regulator tyf. This chain is LSM12 homolog A, found in Drosophila melanogaster (Fruit fly).